The chain runs to 314 residues: Olfactory receptor 5P76 (314 aa).

The Extracellular portion of the chain corresponds to M1 to V28. Residue N8 is glycosylated (N-linked (GlcNAc...) asparagine). Residues V29–I49 form a helical membrane-spanning segment. Topologically, residues L50 to Q57 are cytoplasmic. A helical membrane pass occupies residues L58–S78. Residues S79 to I102 lie on the Extracellular side of the membrane. A disulfide bridge links C100 with C192. A helical membrane pass occupies residues Q103–Y123. Over D124–S136 the chain is Cytoplasmic. A helical transmembrane segment spans residues N137–L157. The Extracellular segment spans residues N158–A199. A helical transmembrane segment spans residues V200–S220. The Cytoplasmic portion of the chain corresponds to Y221–A240. A helical membrane pass occupies residues F241–I261. Topologically, residues Y262–N274 are extracellular. The helical transmembrane segment at K275 to L295 threads the bilayer. The Cytoplasmic portion of the chain corresponds to R296–S314.

The protein belongs to the G-protein coupled receptor 1 family.

It is found in the cell membrane. Functionally, potential odorant receptor. This chain is Olfactory receptor 5P76, found in Mus musculus (Mouse).